Here is a 760-residue protein sequence, read N- to C-terminus: Phosphoribosylformylglycinamidine synthase subunit PurL (760 aa).

Residues methionine 1–glutamine 25 form a disordered region. The active site involves histidine 69. Residues tyrosine 72 and lysine 115 each coordinate ATP. Glutamate 117 provides a ligand contact to Mg(2+). Substrate is bound by residues serine 118–histidine 121 and arginine 140. Histidine 119 serves as the catalytic Proton acceptor. Aspartate 141 provides a ligand contact to Mg(2+). Substrate is bound at residue glutamine 265. A Mg(2+)-binding site is contributed by aspartate 293. Glutamate 337 to glutamine 339 is a substrate binding site. Residues asparagine 519 and glycine 556 each contribute to the ATP site. Mg(2+) is bound at residue asparagine 557. Residue serine 559 coordinates substrate.

The protein belongs to the FGAMS family. In terms of assembly, monomer. Part of the FGAM synthase complex composed of 1 PurL, 1 PurQ and 2 PurS subunits.

Its subcellular location is the cytoplasm. It carries out the reaction N(2)-formyl-N(1)-(5-phospho-beta-D-ribosyl)glycinamide + L-glutamine + ATP + H2O = 2-formamido-N(1)-(5-O-phospho-beta-D-ribosyl)acetamidine + L-glutamate + ADP + phosphate + H(+). It participates in purine metabolism; IMP biosynthesis via de novo pathway; 5-amino-1-(5-phospho-D-ribosyl)imidazole from N(2)-formyl-N(1)-(5-phospho-D-ribosyl)glycinamide: step 1/2. In terms of biological role, part of the phosphoribosylformylglycinamidine synthase complex involved in the purines biosynthetic pathway. Catalyzes the ATP-dependent conversion of formylglycinamide ribonucleotide (FGAR) and glutamine to yield formylglycinamidine ribonucleotide (FGAM) and glutamate. The FGAM synthase complex is composed of three subunits. PurQ produces an ammonia molecule by converting glutamine to glutamate. PurL transfers the ammonia molecule to FGAR to form FGAM in an ATP-dependent manner. PurS interacts with PurQ and PurL and is thought to assist in the transfer of the ammonia molecule from PurQ to PurL. This is Phosphoribosylformylglycinamidine synthase subunit PurL from Tropheryma whipplei (strain TW08/27) (Whipple's bacillus).